The chain runs to 419 residues: Putative trans-acting enoyl reductase MT2525 (419 aa).

Residue K127 forms an Isoglutamyl lysine isopeptide (Lys-Gln) (interchain with Q-Cter in protein Pup) linkage. Residues 197-232 (NDPDARRQLSDPYMLSPDRGAEPELGPQPDLPSRRG) are disordered. Residues 284–304 (VLAPVVSVVGGGVGNAMFGLA) form a helical membrane-spanning segment.

The protein belongs to the saccharopine dehydrogenase family. Enoyl reductase subfamily.

Its subcellular location is the cell membrane. The protein is Putative trans-acting enoyl reductase MT2525 of Mycobacterium tuberculosis (strain CDC 1551 / Oshkosh).